Here is a 229-residue protein sequence, read N- to C-terminus: UPF0319 protein Sbal223_2728 (229 aa).

Positions 1-21 (MKSLLPISSLLVLLGSASAFA) are cleaved as a signal peptide.

This sequence belongs to the UPF0319 family.

The chain is UPF0319 protein Sbal223_2728 from Shewanella baltica (strain OS223).